A 282-amino-acid polypeptide reads, in one-letter code: Pantothenate synthetase (282 aa).

ATP is bound at residue methionine 30–histidine 37. Histidine 37 acts as the Proton donor in catalysis. Position 61 (glutamine 61) interacts with (R)-pantoate. Position 61 (glutamine 61) interacts with beta-alanine. An ATP-binding site is contributed by glycine 147 to aspartate 150. Position 153 (glutamine 153) interacts with (R)-pantoate. ATP contacts are provided by residues isoleucine 176 and lysine 184 to arginine 187.

This sequence belongs to the pantothenate synthetase family. In terms of assembly, homodimer.

It localises to the cytoplasm. It catalyses the reaction (R)-pantoate + beta-alanine + ATP = (R)-pantothenate + AMP + diphosphate + H(+). It functions in the pathway cofactor biosynthesis; (R)-pantothenate biosynthesis; (R)-pantothenate from (R)-pantoate and beta-alanine: step 1/1. In terms of biological role, catalyzes the condensation of pantoate with beta-alanine in an ATP-dependent reaction via a pantoyl-adenylate intermediate. This Enterococcus faecalis (strain ATCC 700802 / V583) protein is Pantothenate synthetase.